The primary structure comprises 288 residues: Quinate/shikimate dehydrogenase (288 aa).

Positions 71 and 107 each coordinate substrate. NAD(+)-binding positions include 132 to 135, 155 to 158, Lys-205, 232 to 235, and Gly-255; these read AGGA, NRRD, and CVYN.

This sequence belongs to the shikimate dehydrogenase family. Homodimer.

It carries out the reaction L-quinate + NAD(+) = 3-dehydroquinate + NADH + H(+). The enzyme catalyses L-quinate + NADP(+) = 3-dehydroquinate + NADPH + H(+). It catalyses the reaction shikimate + NADP(+) = 3-dehydroshikimate + NADPH + H(+). The catalysed reaction is shikimate + NAD(+) = 3-dehydroshikimate + NADH + H(+). It functions in the pathway metabolic intermediate biosynthesis; chorismate biosynthesis; chorismate from D-erythrose 4-phosphate and phosphoenolpyruvate: step 4/7. Its function is as follows. The actual biological function of YdiB remains unclear, nor is it known whether 3-dehydroshikimate or quinate represents the natural substrate. Catalyzes the reversible NAD-dependent reduction of both 3-dehydroshikimate (DHSA) and 3-dehydroquinate to yield shikimate (SA) and quinate, respectively. It can use both NAD or NADP for catalysis, however it has higher catalytic efficiency with NAD. The chain is Quinate/shikimate dehydrogenase from Escherichia coli O17:K52:H18 (strain UMN026 / ExPEC).